Consider the following 466-residue polypeptide: Methylenetetrahydrofolate--tRNA-(uracil-5-)-methyltransferase TrmFO (466 aa).

G14–G19 lines the FAD pocket.

It belongs to the MnmG family. TrmFO subfamily. FAD serves as cofactor.

It localises to the cytoplasm. It carries out the reaction uridine(54) in tRNA + (6R)-5,10-methylene-5,6,7,8-tetrahydrofolate + NADH + H(+) = 5-methyluridine(54) in tRNA + (6S)-5,6,7,8-tetrahydrofolate + NAD(+). It catalyses the reaction uridine(54) in tRNA + (6R)-5,10-methylene-5,6,7,8-tetrahydrofolate + NADPH + H(+) = 5-methyluridine(54) in tRNA + (6S)-5,6,7,8-tetrahydrofolate + NADP(+). Functionally, catalyzes the folate-dependent formation of 5-methyl-uridine at position 54 (M-5-U54) in all tRNAs. The sequence is that of Methylenetetrahydrofolate--tRNA-(uracil-5-)-methyltransferase TrmFO from Brucella abortus (strain 2308).